The sequence spans 100 residues: Ferredoxin (100 aa).

Positions 1–8 (MLSQVCRF) are excised as a propeptide. In terms of domain architecture, 2Fe-2S ferredoxin-type spans 9–100 (GTITAVKGGV…GENDGAVFEL (92 aa)). [2Fe-2S] cluster contacts are provided by cysteine 46, cysteine 52, cysteine 55, and cysteine 85.

Requires [2Fe-2S] cluster as cofactor.

The protein resides in the hydrogenosome. In terms of biological role, ferredoxins are iron-sulfur proteins that transfer electrons in a wide variety of metabolic reactions. It links pyruvate:ferredoxin oxidoreductase to hydrogenase. This Trichomonas vaginalis protein is Ferredoxin.